Consider the following 2475-residue polypeptide: MGSLGDLPLNRISVLFGSKYSEIDRSALHIRRYLSTHRAATWLEGAVEDLPSVWQDVTKVWPAGEGIHGEARLQQLSAFLRGEGLPSNMEDPMNYLLMPITVLRHLVDFHEFKEAGVNCDIKSMQGFCAGYLAAVAACWEKDQSEFSKVVATMVRTAIFIGAAVDLDELATQRATSIAVRWKTAEAYKPFAATLGRYPGAYMACITDESSVTVTVWEDQAAALVQELERNGLLVKDTRLRGRFHHADHLSAAQDILKLCQQDSRFQLPDTCPAEELPRSNADGDLPTLKSLLSAAIQSILITQADWNLTVSNTLNSLDSSDAKCILSIGAGQFLPRQARSQILNITDSSRGDNLVNGDHDSMTITNGASFVADSINGTAPVPTSIPIAVTGLACRYPQADCVEELWKILEQGLCTVSRMPESRLKPDRLQRKPDGPFWGNFISRPDAFDHRFFKISAREAESMDPQQRLLLQVAYEAMESAGYCGLRATNLPEDVGCYVGVGTEDYSENVGSRNATAFSATGTLQAFNSGRVSHHFGWTGPSVTVDTACSSAAVAIHLACQALQTSDCSVAVAGGVNVMTDPRWSQNLAAASFLSPTGASKAFDANANGYCRGEGAGLVILRPLEAALRDGDPIHAVITGTSVNQGANCSPITVPDSNSQRSLYMKALSLSGLKPEVVSYVEAHGTGTQVGDPIEFESIRKTFAVPSRTERLYVGSIKDNIGHTETSSGVAGLLKTILMLQKGKIPKQANFTQLNPKITVNQEDKMSIPTSSILWKTQKRVAMVTNYGAAGSNAAIVLKEPISTPRALCSDEKERLPSVVPFFVAAQTDESLRAYCQTLKASLLNGAHLESIAVQDLAFNLARKQNRSMEFSVSFTNSSSLTELHDRLDDVISGRMNIEKKTHTSNPVVLCFGGQTGNKASISESLVASSALLRLHLDECESACKALGLPSLFPAIFDSSPNNDIVNLHCVLFSIQYATAKAWIDSGLKVDRMIGHSFGQLTAVCVAGGLSLIDTMQLISTRAHLIRSEWTSEIGVMLSLKGEKNAVRELLDSVPESADLACVNGADSFVAAGSEVAIHEIQKNAAERGIKSQRLDNTHAFHSRLVDPILPGLAKVASTLNYKPLRIPVEACSESEDDWLLPTWEKIVQHSRKPVYFHQAVHRTISRIQGPAIWLEAGTMSPIIGMVRRAVDTPSSVQGHVFCPMDLSGPQAESNLAKITSSLWSNGVPVQFWPFHSSQRGYQWINLPPYQFAKTSHWIEYDPTAFSYQISKHEEPLTEGLKLVQLLKNEGKVSLFRINDNDPMFRMCTAGHAVVEQNLCPASLYFELVARAATTTLPKGTDPTMYHLADLNISAPLVLDMPGSVLLELTQRDSTPGQWAFVLFTREDTLQSVTHATGTISLSPGANNTGISSRFSSLKRLLNPAHWDSIATSPSSSGLKRSTVYQAFRRAVTYAEYYRGVESVYALGHEATGRVNLPSSPTKNSPCDPILIDNFIQVAGIHVNCLSETHDDEVFVCSSVGDVIIGESFVKRDPSVATPWVVYSNYEQESRKKALCDVFVVDEATGSLALCVLAATFTSVSIQSLRRTLTRLTNKGVSPVPVDIAVAAEVAPAVPAASLITATRASSNGDDLRTVQAMLSELLGIPASEIPASASLADVGVDSLMNTEVLSEIKNRFQVVITKSELTAIEDVGALVQRIFPGRSTVHIETHAQPAVGITAINGGSKPSSRGSVPASRVGDDLSGFADKAGELFTASRKSNEHSKATQFLGFCDTVFPQQMELVTAYVVEAFKALGVDLQSLNAGQPIPSVDILPQHSQVMNQLYAVLEYSGLIERSGTSFCRGHCEVNQNATPVLHQRILNDHPHHTSEHKLLHTTGPRLADCLTGAADPLSLLFQDAQARALMQDVYSNAPMFKSATMHLAQYLKNLLSQVNSPRPIKILEIGAGTGGTTDYLLKQLSSVAGLCFEYTFTDISPSLVTLARKRFKTFNSIHYQTLDIEKGPTSEMLGQYDIIVSSNCIHATRSLSTSCSNIQKLLRPQGILCLIELTRNLFWFDLVFGLLEGWWLFNDGRSHALAHESFWDRTLRSSGFNWVDWTDNQSEESNILRLIVASPTRPALSLEATMESSDIHEETVVYGRKDDLDLLADIYYPQILDSDGKSRPVALLIHGGGHIMLSRKDVRHTQVQLLIDMGFLPVSIDYRLCPEVSLLEGPMADACEALAWAQSTLPQLNLQRPDIRPDGNNVVAVGWSSGGHLAMTLAWTAPARGLRAPSAVLSFYCATDYTDPFWTKPNFPYQGDVSIEDVPTQSPFLGLNDRAITSYNPAPSKRALGGWMSPSDPRSMIALHMNWTGQTLSVLFNGHKYKSLVAIAGGDDNVILPKPTLSEIQKACPLSHVCAGRYKSPTFIIHGTLDDLIPVEQSQRTHDQMLANGVESELRVVADAPHLFDMSPNLKNNKDAFRAVADGYEFLRSHVRL.

Residues 14–253 (VLFGSKYSEI…HHADHLSAAQ (240 aa)) are N-terminal acylcarrier protein transacylase domain (SAT). The Ketosynthase family 3 (KS3) domain maps to 384-800 (SIPIAVTGLA…GSNAAIVLKE (417 aa)). Residues Cys-549, His-684, and His-723 each act as for beta-ketoacyl synthase activity in the active site. The malonyl-CoA:ACP transacylase (MAT) domain stretch occupies residues 910 to 1212 (LCFGGQTGNK…CPMDLSGPQA (303 aa)). The active-site For acyl/malonyl transferase activity is the Ser-997. An N-terminal hotdog fold region spans residues 1279–1407 (EGLKLVQLLK…GTISLSPGAN (129 aa)). Residues 1279–1586 (EGLKLVQLLK…FTSVSIQSLR (308 aa)) enclose the PKS/mFAS DH domain. Residues 1282–1585 (KLVQLLKNEG…TFTSVSIQSL (304 aa)) are product template (PT) domain. His-1312 functions as the Proton acceptor; for dehydratase activity in the catalytic mechanism. The segment at 1435–1586 (SSSGLKRSTV…FTSVSIQSLR (152 aa)) is C-terminal hotdog fold. Asp-1493 serves as the catalytic Proton donor; for dehydratase activity. The 78-residue stretch at 1626-1703 (SSNGDDLRTV…ALVQRIFPGR (78 aa)) folds into the Carrier domain. An O-(pantetheine 4'-phosphoryl)serine modification is found at Ser-1663. A methyltransferase (CMeT) domain region spans residues 1865–2098 (HHTSEHKLLH…GFNWVDWTDN (234 aa)). The tract at residues 2127–2475 (SDIHEETVVY…YEFLRSHVRL (349 aa)) is thioesterase (TE) domain. Catalysis depends on for thioesterase activity residues Ser-2250 and Asp-2412.

It catalyses the reaction 3 malonyl-CoA + acetyl-CoA + 2 S-adenosyl-L-methionine = 3,5-dimethylorsellinate + 2 S-adenosyl-L-homocysteine + 3 CO2 + 4 CoA. It participates in secondary metabolite biosynthesis; terpenoid biosynthesis. Functionally, non-reducing polyketide synthase; part of the gene cluster that mediates the biosynthesis of paraherquonin, a meroterpenoid with a unique, highly congested hexacyclic molecular architecture. The first step of the pathway is the synthesis of 3,5-dimethylorsellinic acid (DMOA) by the polyketide synthase prhL. Synthesis of DMOA is followed by farnesylation by the prenyltransferase prhE, methylesterification by the methyl-transferase prhM, epoxidation of the prenyl chain by the flavin-dependent monooxygenase prhF, and cyclization of the farnesyl moiety by the terpene cyclase prhH, to yield the tetracyclic intermediate, protoaustinoid A. The short chain dehydrogenase prhI then oxidizes the C-3 alcohol group of the terpene cyclase product to transform protoaustinoid A into protoaustinoid B. The FAD-binding monooxygenase prhJ catalyzes the oxidation of protoaustinoid B into preaustinoid A which is further oxidized into preaustinoid A1 by FAD-binding monooxygenase phrK. Finally, prhA leads to berkeleydione via the berkeleyone B intermediate. PrhA is a multifunctional dioxygenase that first desaturates at C5-C6 to form berkeleyone B, followed by rearrangement of the A/B-ring to form the cycloheptadiene moiety in berkeleydione. Berkeleydione serves as the key intermediate for the biosynthesis of paraherquonin as well as many other meroterpenoids. The cytochrome P450 monooxygenases prhB, prhD, and prhN, as well as the isomerase prhC, are probably involved in the late stage of paraherquonin biosynthesis, after the production of berkeleydione. Especially prhC might be a multifunctional enzyme that catalyzes the D-ring expansion via intramolecular methoxy rearrangement, as well as the hydrolysis of the expanded D-ring. The sequence is that of Non-reducing polyketide synthase prhL from Penicillium brasilianum.